Consider the following 309-residue polypeptide: MASEKSKILVVGGTGYLGRHVVAASARLGHPTSALVRDTAPSDPAKAALLKSFQDAGVTLLKGDLYDQASLVSAVKGADVVISVLGSMQIADQSRLVDAIKEAGNVKRFFPSEFGLDVDRTGIVEPAKSILGAKVGIRRATEAAGIPYTYAVAGFFAGFGLPKVGQVLAPGPPADKAVVLGDGDTKAVFVEEGDIATYTVLAADDPRAENKVLYIKPPANTLSHNELLSLWEKKTGKTFRREYVPEEAVLKQIQESPIPLNIILAIGHAAFVRGEQTGFEIDPAKGVDASELYPDVKYTTVDEYLNRFL.

Residues Gly-12–Gly-18, Arg-37, and Lys-46 contribute to the NADP(+) site. Lys-134 (proton acceptor) is an active-site residue. Arg-138 serves as a coordination point for NADP(+).

Belongs to the NmrA-type oxidoreductase family. Isoflavone reductase subfamily. In terms of assembly, monomer.

The protein localises to the cytoplasm. It functions in the pathway alkaloid biosynthesis. Its function is as follows. Reductase that may be involved in a late step of alkaloid biosynthesis. The protein is Isoflavone reductase homolog IRL of Zea mays (Maize).